Reading from the N-terminus, the 221-residue chain is 7-cyano-7-deazaguanine synthase (221 aa).

8–18 provides a ligand contact to ATP; the sequence is MSGGMDSTLCA. Zn(2+)-binding residues include Cys-187, Cys-195, Cys-198, and Cys-201.

The protein belongs to the QueC family. Requires Zn(2+) as cofactor.

The enzyme catalyses 7-carboxy-7-deazaguanine + NH4(+) + ATP = 7-cyano-7-deazaguanine + ADP + phosphate + H2O + H(+). Its pathway is purine metabolism; 7-cyano-7-deazaguanine biosynthesis. Catalyzes the ATP-dependent conversion of 7-carboxy-7-deazaguanine (CDG) to 7-cyano-7-deazaguanine (preQ(0)). This chain is 7-cyano-7-deazaguanine synthase, found in Campylobacter concisus (strain 13826).